A 414-amino-acid chain; its full sequence is 26S proteasome regulatory subunit 8 homolog (414 aa).

197–204 is an ATP binding site; it reads GPPGTGKT.

The protein belongs to the AAA ATPase family.

The protein resides in the cytoplasm. It localises to the nucleus. Functionally, the 26S proteasome is involved in the ATP-dependent degradation of ubiquitinated proteins. The regulatory (or ATPase) complex confers ATP dependency and substrate specificity to the 26S complex. This chain is 26S proteasome regulatory subunit 8 homolog, found in Naegleria fowleri (Brain eating amoeba).